The sequence spans 688 residues: Glycine--tRNA ligase beta subunit (688 aa).

It belongs to the class-II aminoacyl-tRNA synthetase family. In terms of assembly, tetramer of two alpha and two beta subunits.

Its subcellular location is the cytoplasm. The enzyme catalyses tRNA(Gly) + glycine + ATP = glycyl-tRNA(Gly) + AMP + diphosphate. This is Glycine--tRNA ligase beta subunit from Listeria monocytogenes serotype 4b (strain CLIP80459).